A 319-amino-acid chain; its full sequence is tRNA dimethylallyltransferase (319 aa).

16 to 23 (GPTASGKS) contributes to the ATP binding site. 18-23 (TASGKS) lines the substrate pocket. An interaction with substrate tRNA region spans residues 46 to 49 (DSMV).

This sequence belongs to the IPP transferase family. As to quaternary structure, monomer. The cofactor is Mg(2+).

The catalysed reaction is adenosine(37) in tRNA + dimethylallyl diphosphate = N(6)-dimethylallyladenosine(37) in tRNA + diphosphate. In terms of biological role, catalyzes the transfer of a dimethylallyl group onto the adenine at position 37 in tRNAs that read codons beginning with uridine, leading to the formation of N6-(dimethylallyl)adenosine (i(6)A). This Cutibacterium acnes (strain DSM 16379 / KPA171202) (Propionibacterium acnes) protein is tRNA dimethylallyltransferase.